The following is a 516-amino-acid chain: Arabinose import ATP-binding protein AraG (516 aa).

ABC transporter domains are found at residues 5 to 240 (LRFD…MVGR) and 240 to 497 (REIS…LPQS). Residue 37–44 (GENGAGKS) participates in ATP binding.

It belongs to the ABC transporter superfamily. Arabinose importer (TC 3.A.1.2.2) family. As to quaternary structure, the complex is composed of two ATP-binding proteins (AraG), two transmembrane proteins (AraH) and a solute-binding protein (AraF).

The protein resides in the cell inner membrane. It carries out the reaction L-arabinose(out) + ATP + H2O = L-arabinose(in) + ADP + phosphate + H(+). Part of the ABC transporter complex AraFGH involved in arabinose import. Responsible for energy coupling to the transport system. This chain is Arabinose import ATP-binding protein AraG, found in Paraburkholderia xenovorans (strain LB400).